The following is a 1056-amino-acid chain: Pleckstrin homology domain-containing family M member 1 (1056 aa).

In terms of domain architecture, RUN spans 41–183; that stretch reads TSEDGDANTM…LSFELSYKSA (143 aa). Disordered stretches follow at residues 215 to 245, 277 to 303, and 360 to 422; these read QRKE…RRNQ, GSKS…EDSD, and PAQA…QAHD. The residue at position 219 (serine 219) is a Phosphoserine. Polar residues predominate over residues 389–404; it reads PVESTSGQQPSSTVSE. 2 positions are modified to phosphoserine: serine 432 and serine 435. The segment at 451 to 483 is disordered; sequence SREQPLESASDHPIASYRGTPGSRPGLHRHFSQ. Serine 490 is subject to Phosphoserine. The PH 1 domain maps to 534–625; the sequence is GLMKLGTVER…WLDRVREALQ (92 aa). The short motif at 632 to 638 is the LIR element; it reads EDEWVNV. An interaction with RAB7A region spans residues 654-1056; that stretch reads CLSPSDLLSE…RKYQEQNIFA (403 aa). A PH 2 domain is found at 683-777; the sequence is DAIKESLLYL…WRDLVRKVLA (95 aa). The Phorbol-ester/DAG-type zinc-finger motif lies at 986–1040; that stretch reads QHVYHCDLCTQRGFICQICQHHDIIFPFEFDTTVRCAECKTVFHQSCQAVVKKGC.

In terms of assembly, interacts (via N- and C-terminus) with RAB7A (GTP-bound form). Simultaneously interacts with RAB7A and ARL8B; bringing about clustering and fusion of late endosomes and lysosomes. Interacts (via RUN domain) with ARL8B (GTP-bound form); the interaction is required for PLEKHM1 localization to lysosomes and for ARL8B function in delivery and degradation of endocytic and autophagic cargo in lysosomes. PLEKHM1 and PLEKHM2 compete for interaction with ARL8B. Interacts with ARL8A; the interaction is weaker than with ARL8B. Interacts with VPS41, VPS11, VPS18, VPS33A and VPS39; indicative for an association with the HOPS complex; the interactions with, at least, VPS41, VPS11, VPS18 and VPS33A require ARL8B. Interacts with GABARAP, GABARAPL, GABARAPL2, MAP1LC3A, MAP1LC3B and MAP1LC3C. Interacts with PAFAH1B. Interacts (via N- and C-terminus) with NDEL1. Interacts (via C-terminus) with MAP3K7. Interacts (via N- and C-terminus) with FAM98A. Interacts (via C-terminus) with DEF8; this interaction is weak but increased in a RAB7A-dependent manner. In colon carcinoma and breast carcinoma cells, it interacts with sialyl-lex-positive protein. (Microbial infection) Interacts with Salmonella typhimurium sifA. As to expression, expressed in placenta, liver, prostate, thymus, spleen, ovary, colon, colon carcinoma and peripheral blood lymphocytes (PBL). Weakly expressed in brain, lung, kidney, and testis. No expression in heart, skeletal muscle, pancreas and small intestine. Predominantly expressed in the breast carcinoma cell line MCF-7.

The protein localises to the autolysosome membrane. It localises to the endosome membrane. Its subcellular location is the late endosome membrane. It is found in the lysosome membrane. Acts as a multivalent adapter protein that regulates Rab7-dependent and HOPS complex-dependent fusion events in the endolysosomal system and couples autophagic and the endocytic trafficking pathways. Acts as a dual effector of RAB7A and ARL8B that simultaneously binds these GTPases, bringing about clustering and fusion of late endosomes and lysosomes. Required for late stages of endolysosomal maturation, facilitating both endocytosis-mediated degradation of growth factor receptors and autophagosome clearance. Interaction with Arl8b is a crucial factor in the terminal maturation of autophagosomes and to mediate autophagosome-lysosome fusion. Positively regulates lysosome peripheral distribution and ruffled border formation in osteoclasts. May be involved in negative regulation of endocytic transport from early endosome to late endosome/lysosome implicating its association with Rab7. May have a role in sialyl-lex-mediated transduction of apoptotic signals. Involved in bone resorption. In terms of biological role, (Microbial infection) In case of infection contributes to Salmonella typhimurium pathogenesis by supporting the integrity of the Salmonella-containing vacuole (SCV) probably in concert with the HOPS complex and Rab7. The polypeptide is Pleckstrin homology domain-containing family M member 1 (Homo sapiens (Human)).